A 328-amino-acid chain; its full sequence is 4-hydroxythreonine-4-phosphate dehydrogenase (328 aa).

The substrate site is built by His134 and Thr135. A divalent metal cation-binding residues include His164, His209, and His264. 3 residues coordinate substrate: Lys272, Asn281, and Arg290.

It belongs to the PdxA family. In terms of assembly, homodimer. Requires Zn(2+) as cofactor. The cofactor is Mg(2+). Co(2+) serves as cofactor.

The protein resides in the cytoplasm. The enzyme catalyses 4-(phosphooxy)-L-threonine + NAD(+) = 3-amino-2-oxopropyl phosphate + CO2 + NADH. It functions in the pathway cofactor biosynthesis; pyridoxine 5'-phosphate biosynthesis; pyridoxine 5'-phosphate from D-erythrose 4-phosphate: step 4/5. Its function is as follows. Catalyzes the NAD(P)-dependent oxidation of 4-(phosphooxy)-L-threonine (HTP) into 2-amino-3-oxo-4-(phosphooxy)butyric acid which spontaneously decarboxylates to form 3-amino-2-oxopropyl phosphate (AHAP). The polypeptide is 4-hydroxythreonine-4-phosphate dehydrogenase (Shewanella denitrificans (strain OS217 / ATCC BAA-1090 / DSM 15013)).